The following is a 330-amino-acid chain: Aspartate--ammonia ligase (330 aa).

This sequence belongs to the class-II aminoacyl-tRNA synthetase family. AsnA subfamily. In terms of assembly, homodimer.

It is found in the cytoplasm. It catalyses the reaction L-aspartate + NH4(+) + ATP = L-asparagine + AMP + diphosphate + H(+). Its pathway is amino-acid biosynthesis; L-asparagine biosynthesis; L-asparagine from L-aspartate (ammonia route): step 1/1. In Salmonella typhimurium (strain LT2 / SGSC1412 / ATCC 700720), this protein is Aspartate--ammonia ligase.